The following is a 930-amino-acid chain: Isoleucine--tRNA ligase (930 aa).

The short motif at 57-67 (PYANGNIHVGH) is the 'HIGH' region element. L-isoleucyl-5'-AMP is bound at residue Glu554. Residues 595–599 (KMSKS) carry the 'KMSKS' region motif. Lys598 provides a ligand contact to ATP.

Belongs to the class-I aminoacyl-tRNA synthetase family. IleS type 1 subfamily. In terms of assembly, monomer.

The protein resides in the cytoplasm. The catalysed reaction is tRNA(Ile) + L-isoleucine + ATP = L-isoleucyl-tRNA(Ile) + AMP + diphosphate. Its function is as follows. Catalyzes the attachment of isoleucine to tRNA(Ile). As IleRS can inadvertently accommodate and process structurally similar amino acids such as valine, to avoid such errors it has two additional distinct tRNA(Ile)-dependent editing activities. One activity is designated as 'pretransfer' editing and involves the hydrolysis of activated Val-AMP. The other activity is designated 'posttransfer' editing and involves deacylation of mischarged Val-tRNA(Ile). The protein is Isoleucine--tRNA ligase of Streptococcus agalactiae serotype Ia (strain ATCC 27591 / A909 / CDC SS700).